Reading from the N-terminus, the 309-residue chain is Putative S-adenosyl-L-methionine-dependent methyltransferase Mvan_0104 (309 aa).

Residues aspartate 134 and 163-164 (DL) contribute to the S-adenosyl-L-methionine site.

This sequence belongs to the UPF0677 family.

In terms of biological role, exhibits S-adenosyl-L-methionine-dependent methyltransferase activity. This is Putative S-adenosyl-L-methionine-dependent methyltransferase Mvan_0104 from Mycolicibacterium vanbaalenii (strain DSM 7251 / JCM 13017 / BCRC 16820 / KCTC 9966 / NRRL B-24157 / PYR-1) (Mycobacterium vanbaalenii).